The primary structure comprises 185 residues: Ribosome-recycling factor (185 aa).

It belongs to the RRF family.

The protein localises to the cytoplasm. Functionally, responsible for the release of ribosomes from messenger RNA at the termination of protein biosynthesis. May increase the efficiency of translation by recycling ribosomes from one round of translation to another. The chain is Ribosome-recycling factor from Campylobacter fetus subsp. fetus (strain 82-40).